Here is a 307-residue protein sequence, read N- to C-terminus: 2-carboxy-1,4-naphthoquinone phytyltransferase (307 aa).

Transmembrane regions (helical) follow at residues Met-27–Gly-47, Gly-51–Ser-71, Leu-98–Ser-118, Thr-125–Phe-145, Leu-147–Ala-167, Phe-177–Phe-197, Leu-223–Val-243, and Phe-284–Ala-304.

The protein belongs to the MenA family. Type 2 subfamily.

The protein resides in the cell inner membrane. It catalyses the reaction 2-carboxy-1,4-naphthoquinone + phytyl diphosphate + H(+) = demethylphylloquinone + CO2 + diphosphate. The protein operates within cofactor biosynthesis; phylloquinone biosynthesis. Its function is as follows. Involved in the synthesis of phylloquinone (vitamin K1). Catalyzes the transfer of a prenyl chain to 2-carboxy-1,4-naphthoquinone. The polypeptide is 2-carboxy-1,4-naphthoquinone phytyltransferase (Synechocystis sp. (strain ATCC 27184 / PCC 6803 / Kazusa)).